A 74-amino-acid chain; its full sequence is Conotoxin VnMEKL-0221 (74 aa).

The N-terminal stretch at 1–19 (MEKLTILLLVAAVLMWTQA) is a signal peptide. Positions 20-46 (LIQEKRPKEKIKFLSKRKTTAESWWEG) are excised as a propeptide. Intrachain disulfides connect C48/C62, C55/C66, and C61/C71.

It belongs to the conotoxin O2 superfamily. Expressed by the venom duct.

The protein localises to the secreted. The protein is Conotoxin VnMEKL-0221 of Conus ventricosus (Mediterranean cone).